The following is a 684-amino-acid chain: MTDTVVNRWMYPGDGPLQSNDKEQLQAGWSVHPGAQTDRQRKQEELTDEEKEIINRVIARAEKMETMEQERIGRLVDRLETMRKNVAGDGVNRCILCGEQLGMLGSACVVCEDCKKNVCTKCGVETSNNRPHPVWLCKICLEQREVWKRSGAWFFKGFPKQVLPQPMPIKKTKPQQPAGEPATQEQPTPESRHPARAPARGDMEDRRAPGQKPGPDLTSAPGRGSHGPPTRRASEARMSTTTRDSEGWDHGHGGGAGDTSRSPGGEQGLRRANSVQASRPAPASMPSPAPPQPVQPGPPGGSRAAPGPGRFPEQSTEAPPSDPGYPGAVAPAREERTGPTGGFQAAPHTAGPYSQAAPARQPPPAEEEEEEANSYDSDQATTLGALEFSLLYDQDNSNLQCTIIRAKGLKPMDSNGLADPYVKLHLLPGASKSNKLRTKTLRNTRNPVWNETLQYHGITEEDMQRKTLRISVCDEDKFGHNEFIGETRFSLKKLKANQRKNFNICLERVIPMKRAGTTGSARGMALYEEEQVERIGDIEERGKILVSLMYSTQQGGLIVGIIRCVHLAAMDANGYSDPFVKLWLKPDMGKKAKHKTQIKKKTLNPEFNEEFFYDIKHSDLAKKSLDISVWDYDIGKSNDYIGGCQLGISAKGERLKHWYECLKNKDKKIERWHQLQNENHVSSD.

Positions Met1 to Asp21 are disordered. One can recognise a RabBD domain in the interval Gln40 to Gly157. Residues Gly88–Glu145 form an FYVE-type zinc finger. Residues Cys94, Cys97, Cys111, Cys114, Cys119, Cys122, Cys137, and Cys140 each contribute to the Zn(2+) site. A disordered region spans residues Val162 to Ser377. The segment covering Ala199–Ala208 has biased composition (basic and acidic residues). At Arg223 the chain carries Omega-N-methylarginine. The segment covering Arg243 to His252 has biased composition (basic and acidic residues). Phosphoserine is present on Ser274. Positions Ala283–Pro299 are enriched in pro residues. A compositionally biased stretch (low complexity) spans Gly301–Arg310. The C2 1 domain occupies Thr382–Ile504. The Ca(2+) site is built by Met412, Asp413, Asp419, Asp474, Glu475, Asp476, Glu482, Glu529, Asp571, Asp577, Asp631, Tyr632, Asp633, and Asp639. One can recognise a C2 2 domain in the interval Glu540–His673. 2 positions are modified to phosphoserine: Ser682 and Ser683.

Interacts with RAB3B, RAB3C, RAB3D, RAB8A, RAB27A and RAB27B. Interacts with RAB3A; this interaction recruits RPH3A to synaptic vesicules. Interacts (via C2B domain) with SNAP25. Interacts with deubiquitinating enzyme CAND1; this interaction results in the deubiquitination of RPH3A. Interacts with GRIN2A and DLG4; this ternary complex regulates NMDA receptor composition at postsynaptic membranes. Interacts with SNCA. Requires Ca(2+) as cofactor. Post-translationally, ubiquitinated. Deubiquitinated by CAND1 to prevent its degradation. In terms of tissue distribution, specifically expressed in brain.

The protein resides in the cytoplasmic vesicle. The protein localises to the secretory vesicle. Its subcellular location is the synaptic vesicle membrane. It localises to the cell projection. It is found in the dendritic spine. The protein resides in the postsynaptic cell membrane. The protein localises to the membrane. Functionally, plays an essential role in docking and fusion steps of regulated exocytosis. At the presynaptic level, RPH3A is recruited by RAB3A to the synaptic vesicle membrane in a GTP-dependent manner where it modulates synaptic vesicle trafficking and calcium-triggered neurotransmitter release. In the post-synaptic compartment, forms a ternary complex with GRIN2A and DLG4 and regulates NMDA receptor stability. Also plays a role in the exocytosis of arginine vasopressin hormone. This chain is Rabphilin-3A (Rph3a), found in Rattus norvegicus (Rat).